Here is a 137-residue protein sequence, read N- to C-terminus: MTLTVRVIAPDKTIWDKEAQEVILPSTTGQLGILGGHAPLLTALDTGVMRVRAENDWIAIALMGGFAEIEADEVSILVNGAERGDNIDTEKARLAYEEAEKRLQTSESSDNLQEKIKAKQTLKRARARLQAAGGMVN.

Belongs to the ATPase epsilon chain family. F-type ATPases have 2 components, CF(1) - the catalytic core - and CF(0) - the membrane proton channel. CF(1) has five subunits: alpha(3), beta(3), gamma(1), delta(1), epsilon(1). CF(0) has three main subunits: a, b and c.

Its subcellular location is the cellular thylakoid membrane. Produces ATP from ADP in the presence of a proton gradient across the membrane. This is ATP synthase epsilon chain from Trichodesmium erythraeum (strain IMS101).